The chain runs to 353 residues: Dihydroorotate dehydrogenase (quinone) (353 aa).

Residues 67–71 (AGFDK) and Thr-91 each bind FMN. Substrate is bound at residue Lys-71. Position 116-120 (116-120 (NRMGF)) interacts with substrate. Residues Asn-144 and Asn-177 each coordinate FMN. Asn-177 lines the substrate pocket. Ser-180 acts as the Nucleophile in catalysis. A substrate-binding site is contributed by Asn-182. Residues Lys-213 and Thr-241 each contribute to the FMN site. 242-243 (NT) contributes to the substrate binding site. Residues Gly-265, Gly-294, and 315-316 (YT) contribute to the FMN site.

The protein belongs to the dihydroorotate dehydrogenase family. Type 2 subfamily. As to quaternary structure, monomer. FMN serves as cofactor.

It is found in the cell membrane. The catalysed reaction is (S)-dihydroorotate + a quinone = orotate + a quinol. The protein operates within pyrimidine metabolism; UMP biosynthesis via de novo pathway; orotate from (S)-dihydroorotate (quinone route): step 1/1. Its function is as follows. Catalyzes the conversion of dihydroorotate to orotate with quinone as electron acceptor. The chain is Dihydroorotate dehydrogenase (quinone) from Mycobacteroides abscessus (strain ATCC 19977 / DSM 44196 / CCUG 20993 / CIP 104536 / JCM 13569 / NCTC 13031 / TMC 1543 / L948) (Mycobacterium abscessus).